Here is a 302-residue protein sequence, read N- to C-terminus: HTH-type transcriptional regulator GbpR (302 aa).

Residues 1–56 (MSHLRMLVMIEEHGQVSAAAAAMNMTQPAASRMLSEMEAIVKSPLCQRASRGVVLT) form the HTH lysR-type domain. Positions 16 to 35 (VSAAAAAMNMTQPAASRMLS) form a DNA-binding region, H-T-H motif.

This sequence belongs to the LysR transcriptional regulatory family.

Its function is as follows. Activator of the expression of chvE when bound to its inducer and represses its expression in the absence of inducer (L-arabinose, D-fucose or D-galactose). Negatively regulates its own expression. This Rhizobium radiobacter (Agrobacterium tumefaciens) protein is HTH-type transcriptional regulator GbpR (gbpR).